Consider the following 394-residue polypeptide: MSSAATVDPNEAFGLITKNLQEVLNPQIIKDVLEVQKRHLKLYWGTAPTGRPHCGYFVPMTKLADFLKAGCEVTVLLADLHAFLDNMKAPLEVVNYRAKYYELTIKAILRSINVPIEKLKFVVGSSYQLTPDYTMDIFRLSNIVSQNDAKRAGADVVKQVANPLLSGLIYPLMQALDEQFLDVDCQFGGVDQRKIFVLAEENLPSLGYKKRAHLMNPMVPGLAQGGKMSASDPNSKIDLLEEPKQVKKKINSAFCSPGNVEENGLLSFVQYVIAPIQELKFGTNHFEFFIDRPEKFGGPITYKSFEEMKLAFKEEKLSPPDLKIGVADAINELLEPIRQEFANNKEFQEASEKGYPVATPQKSKKAKKPKNKGTKYPGATKTNEIATKLEETKL.

An N-acetylserine modification is found at Ser2. Tyr43 is a binding site for L-tyrosine. Residues Pro48–Tyr56 carry the 'HIGH' region motif. The L-tyrosine site is built by Tyr170, Gln174, Asp177, and Gln192. The 'KMSKS' region motif lies at Lys227–Ser231. Ser235 carries the phosphoserine modification. Residues Gln348–Leu394 are disordered. Phosphothreonine is present on Thr359. The Nuclear localization signal motif lies at Pro360–Gly378. A compositionally biased stretch (basic residues) spans Lys362–Gly373.

This sequence belongs to the class-I aminoacyl-tRNA synthetase family. In terms of assembly, homodimer. Interacts with KNR4/SMI1.

It localises to the cytoplasm. It is found in the nucleus. It carries out the reaction tRNA(Tyr) + L-tyrosine + ATP = L-tyrosyl-tRNA(Tyr) + AMP + diphosphate + H(+). Inhibited by N-ethylmaleimide and p-chloromercuribenzoate. In terms of biological role, catalyzes the attachment of L-tyrosine to tRNA(Tyr) in a two-step reaction: L-tyrosine is first activated by ATP to form Tyr-AMP and then transferred to the acceptor end of tRNA(Tyr). The specificity determinants on tRNA(Tyr) are the base pair C1-G72, the discriminator residue A73, and the three anticodon bases G34, U35 and A36. Also involved in nuclear tRNA export. Also attaches D-Tyr to tRNA(Tyr), this reaction is about 150-fold less efficient than attachment of L-Tyr. This is Tyrosine--tRNA ligase, cytoplasmic from Saccharomyces cerevisiae (strain ATCC 204508 / S288c) (Baker's yeast).